A 505-amino-acid chain; its full sequence is MADGGKPPTPEKKSWADVEEEEEAKAKAAAAAEAASSSSSNEPAVDAQAKQIEALSLSVPEEHGGSGGGGDDQGPPLLDDSDESQIQAVTSGGTVYESAAAFEDLKLTPELLKGLHDEMGFSRPSKIQAVTLPMILTPPYKDLIAQAHNGSGKTTCFVLGMLSRVDPNRKVTQAICICPTRELAQQNKSVLMRMGKFTGITCACAIPPAQKDYVPIAKMPKITDQVVIGTSGTLMKWINHKKILTNDIKILVFDEADHMLAEDGFRSDSERIMRDIQRSAGGCQVLLFSATFNERVKDFVTRVIKDGNQIFVKKEELTLEKVKQYKVQVPDERAKIAVIKDKIFEFGQKVGQVIIFVRTKQSTKDVHNALTLEDYVCSSIQGSLDQSEREKIIQEFKNGYTKVLISTDVLARGFDQAQVNLVINYDMPIKFGTRDEPDYEVYLHRIGRAGRFGRKGAVFNLLCGETDNTVMRKIETYFQHNVPEVRNWQSEEDFERALKDAGLVE.

The tract at residues 1–81 (MADGGKPPTP…DQGPPLLDDS (81 aa)) is disordered. Residues 27–44 (KAAAAAEAASSSSSNEPA) are compositionally biased toward low complexity. The Q motif motif lies at 100–129 (AAFEDLKLTPELLKGLHDEMGFSRPSKIQA). One can recognise a Helicase ATP-binding domain in the interval 134 to 310 (MILTPPYKDL…TRVIKDGNQI (177 aa)). 147–154 (AHNGSGKT) serves as a coordination point for ATP. The DEAD box motif lies at 254-257 (DEAD). In terms of domain architecture, Helicase C-terminal spans 338-493 (VIKDKIFEFG…EVRNWQSEED (156 aa)).

The protein belongs to the DEAD box helicase family. DDX19/DBP5 subfamily.

It is found in the cytoplasm. The protein resides in the nucleus. It catalyses the reaction ATP + H2O = ADP + phosphate + H(+). In terms of biological role, ATP-dependent RNA helicase essential for mRNA export from the nucleus. Plays an important role in the positive regulation of CBF/DREB transcription factors. The sequence is that of DEAD-box ATP-dependent RNA helicase 38 from Oryza sativa subsp. japonica (Rice).